The chain runs to 242 residues: NH(3)-dependent NAD(+) synthetase (242 aa).

Position 27-34 (27-34) interacts with ATP; sequence GISGGIDS. A Mg(2+)-binding site is contributed by aspartate 33. Arginine 109 provides a ligand contact to deamido-NAD(+). Residue threonine 129 coordinates ATP. Mg(2+) is bound at residue glutamate 134. The deamido-NAD(+) site is built by lysine 142 and aspartate 149. The ATP site is built by lysine 158 and threonine 180. 231-232 is a deamido-NAD(+) binding site; it reads HK.

Belongs to the NAD synthetase family. In terms of assembly, homodimer.

It catalyses the reaction deamido-NAD(+) + NH4(+) + ATP = AMP + diphosphate + NAD(+) + H(+). Its pathway is cofactor biosynthesis; NAD(+) biosynthesis; NAD(+) from deamido-NAD(+) (ammonia route): step 1/1. Its function is as follows. Catalyzes the ATP-dependent amidation of deamido-NAD to form NAD. Uses ammonia as a nitrogen source. The protein is NH(3)-dependent NAD(+) synthetase of Thermoplasma volcanium (strain ATCC 51530 / DSM 4299 / JCM 9571 / NBRC 15438 / GSS1).